The primary structure comprises 28 residues: M-poneritoxin-Da4b (28 aa).

An Alanine amide modification is found at Ala-28.

Expressed by the venom gland.

The protein resides in the secreted. The synthetic peptide has antimicrobial activity against the Gram-positive bacteria B.amyloliquefacies S499 (MIC=0.05 mM), L.monocytogenes 2231 and S.aureus ATCC 29213, against the Gram-negative bacteria P.putida BTP1, P.aeruginosa PaO1 and E.coli ATCC 10536, and against the fungi S.cerevisiae, R.mucilaginosa and C.cucumerinum. It is not active against the fungi F.oxysporum and B.cinerea. The sequence is that of M-poneritoxin-Da4b from Dinoponera australis (Giant neotropical hunting ant).